A 415-amino-acid polypeptide reads, in one-letter code: NEDD8-specific protease 2 (415 aa).

Positions 1–42 (MRSNSIFTKEIDSEAVKKSSNLRPPSTGSSNSNGSDTASPKK) are disordered. Residues 26-38 (STGSSNSNGSDTA) are compositionally biased toward low complexity. Ser35 is subject to Phosphoserine. Catalysis depends on residues His171, Asp188, and Cys229. Residues 320–415 (AVTSDSAQPH…QHTQQSIEIH (96 aa)) are disordered. Composition is skewed to polar residues over residues 335–368 (MPSSQPQSRSESLPLTHPNSEPNPKLDSQPNSSP), 379–390 (TASTSVLPTSIL), and 405–415 (IQHTQQSIEIH). Ser367 is subject to Phosphoserine.

It belongs to the peptidase C48 family.

It localises to the cytoplasm. The protein localises to the nucleus. Its function is as follows. Protease that catalyzes two essential functions in the NEDD8 pathway: processing of full-length NEDD8 to its mature form and deconjugation of NEDD8 from targeted proteins such as the pcu1, pcu2 and pcu4 cullins and other proteins. Has a role in meiosis. This is NEDD8-specific protease 2 (nep2) from Schizosaccharomyces pombe (strain 972 / ATCC 24843) (Fission yeast).